Reading from the N-terminus, the 503-residue chain is Protein O-glucosyltransferase 3 (503 aa).

The signal sequence occupies residues 1-19 (MQALPLGLQLALLVAAGAG). A Filamin repeat occupies 19–129 (GARVSAPRSL…VAHSPYILKG (111 aa)). N-linked (GlcNAc...) asparagine glycans are attached at residues N56 and N302. The short motif at 500–503 (REEL) is the Prevents secretion from ER element.

The protein belongs to the KDELC family.

The protein localises to the endoplasmic reticulum lumen. The enzyme catalyses L-seryl-[EGF-like domain protein] + UDP-alpha-D-glucose = 3-O-(beta-D-glucosyl)-L-seryl-[EGF-like domain protein] + UDP + H(+). It carries out the reaction L-seryl-[EGF-like domain protein] + UDP-alpha-D-xylose = 3-O-(beta-D-xylosyl)-L-seryl-[EGF-like domain protein] + UDP + H(+). It functions in the pathway protein modification; protein glycosylation. In terms of biological role, protein glucosyltransferase that catalyzes the transfer of glucose from UDP-glucose to a serine residue within the consensus sequence peptide C-X-N-T-X-G-S-F-X-C. Can also catalyze the transfer of xylose from UDP-xylose but less efficiently. Specifically targets extracellular EGF repeats of proteins such as NOTCH1, NOTCH3, FBN1, FBN2 and LTBP1. May regulate the transport of NOTCH1 and NOTCH3 to the plasma membrane and thereby the Notch signaling pathway. The chain is Protein O-glucosyltransferase 3 (Poglut3) from Mus musculus (Mouse).